Here is a 298-residue protein sequence, read N- to C-terminus: Bifunctional protein FolD (298 aa).

NADP(+) is bound by residues glycine 165–serine 167, serine 190, and isoleucine 231.

Belongs to the tetrahydrofolate dehydrogenase/cyclohydrolase family. As to quaternary structure, homodimer.

It carries out the reaction (6R)-5,10-methylene-5,6,7,8-tetrahydrofolate + NADP(+) = (6R)-5,10-methenyltetrahydrofolate + NADPH. It catalyses the reaction (6R)-5,10-methenyltetrahydrofolate + H2O = (6R)-10-formyltetrahydrofolate + H(+). The protein operates within one-carbon metabolism; tetrahydrofolate interconversion. Catalyzes the oxidation of 5,10-methylenetetrahydrofolate to 5,10-methenyltetrahydrofolate and then the hydrolysis of 5,10-methenyltetrahydrofolate to 10-formyltetrahydrofolate. This chain is Bifunctional protein FolD, found in Prochlorococcus marinus subsp. pastoris (strain CCMP1986 / NIES-2087 / MED4).